The sequence spans 396 residues: L-lactate dehydrogenase (396 aa).

Residues 1 to 380 (MIISAASDYR…SGDSLVQELG (380 aa)) enclose the FMN hydroxy acid dehydrogenase domain. Tyr24 provides a ligand contact to substrate. Positions 106 and 127 each coordinate FMN. Residue Tyr129 coordinates substrate. Thr155 is an FMN binding site. Substrate is bound at residue Arg164. Lys251 lines the FMN pocket. Residue His275 is the Proton acceptor of the active site. Arg278 contacts substrate. 306–330 (DSGIRNGLDVVRMIALGADTVLLGR) lines the FMN pocket.

It belongs to the FMN-dependent alpha-hydroxy acid dehydrogenase family. It depends on FMN as a cofactor.

It localises to the cell inner membrane. The enzyme catalyses (S)-lactate + A = pyruvate + AH2. In terms of biological role, catalyzes the conversion of L-lactate to pyruvate. Is coupled to the respiratory chain. The sequence is that of L-lactate dehydrogenase from Salmonella paratyphi A (strain ATCC 9150 / SARB42).